We begin with the raw amino-acid sequence, 367 residues long: C-glycoside deglycosidase alpha subunit (367 aa).

Mg(2+) is bound at residue E146. H148 functions as the Proton acceptor in the catalytic mechanism. Mg(2+) contacts are provided by D178, H276, and E312.

This sequence belongs to the C-glycoside deglycosidase alpha subunit family. As to quaternary structure, heterodimer composed of an alpha subunit (CarB1) and a beta subunit (CarC1). Mg(2+) is required as a cofactor.

It carries out the reaction 3''-dehydroisovitexin = 1,5-anhydro-D-erythro-hex-1-en-3-ulose + apigenin. Activity is strongly reduced in the presence of chelating agents. Functionally, carbon-carbon bond-cleaving enzyme which participates in the metabolism of C-glycosides. Acts on the C6-glycosylated compound 3''-dehydroisovitexin (3''-oxo-isovitexin). Shows weak activity with 3''-dehydroisoorientin (3''-oxo-homoorientin) and 3'-dehydromangiferin (3'-oxo-mangiferin). This is C-glycoside deglycosidase alpha subunit from Arthrobacter globiformis (strain ATCC 8010 / DSM 20124 / JCM 1332 / NBRC 12137 / NCIMB 8907 / NRRL B-2979 / 168).